The sequence spans 327 residues: Replication factor C small subunit (327 aa).

47–54 is a binding site for ATP; that stretch reads GPPGTGKT.

It belongs to the activator 1 small subunits family. RfcS subfamily. As to quaternary structure, heteromultimer composed of small subunits (RfcS) and large subunits (RfcL).

Part of the RFC clamp loader complex which loads the PCNA sliding clamp onto DNA. The polypeptide is Replication factor C small subunit (Sulfurisphaera tokodaii (strain DSM 16993 / JCM 10545 / NBRC 100140 / 7) (Sulfolobus tokodaii)).